The sequence spans 123 residues: Seripauperin-16 (123 aa).

The first 20 residues, 1–20 (MVKLTSIAAGVAAIAAGVAA), serve as a signal peptide directing secretion.

This sequence belongs to the SRP1/TIP1 family. Seripauperin subfamily.

The protein is Seripauperin-16 (PAU16) of Saccharomyces cerevisiae (strain ATCC 204508 / S288c) (Baker's yeast).